Reading from the N-terminus, the 1028-residue chain is Unconventional myosin-Ic (1028 aa).

Met1 carries the N-acetylmethionine modification. The Myosin motor domain occupies 12–696 (GVQDFVLLEN…TLFATEDALE (685 aa)). Residues Asn53, Tyr61, 104-113 (SGESGAGKTE), and 157-161 (NDNSS) each bind ATP. Lys348 carries the N6-methyllysine modification. The segment at 573–595 (LSKLMEILMSKQPSYVRCIKPND) is actin-binding. IQ domains are found at residues 699–728 (KHSIATFLQARWRGYHQRQKFLHMKHSAVE) and 722–751 (MKHSAVEIQSWWRGTIGRRKAAKRKWAVDV). Residues 850–1024 (KDNYPQSVPR…NGHLSVVAPR (175 aa)) form the TH1 domain.

It belongs to the TRAFAC class myosin-kinesin ATPase superfamily. Myosin family. Interacts (via its IQ motifs) with calmodulin. As to expression, expressed in brain and the sacculus of the internal ear.

The protein resides in the cytoplasm. Its subcellular location is the cell membrane. The protein localises to the cell projection. It is found in the ruffle membrane. It localises to the cytoplasmic vesicle. The protein resides in the stereocilium membrane. In terms of biological role, myosins are actin-based motor molecules with ATPase activity. Unconventional myosins serve in intracellular movements. Their highly divergent tails are presumed to bind to membranous compartments, which would be moved relative to actin filaments. This chain is Unconventional myosin-Ic (Myo1c), found in Aquarana catesbeiana (American bullfrog).